A 313-amino-acid polypeptide reads, in one-letter code: Solute carrier family 35 member E3 (313 aa).

9 helical membrane-spanning segments follow: residues 17 to 37 (GLLF…WIYV), 40 to 60 (GFPN…GLYI), 77 to 97 (LLLL…SLQN), 126 to 143 (FSTR…GVIL), 153 to 173 (FLGM…QVWV), 187 to 206 (LLYY…VPFF), 225 to 245 (LMVL…YWII), 252 to 272 (TYNM…YVLF), and 275 to 295 (PLSI…LAYT).

This sequence belongs to the TPT transporter family. SLC35E subfamily.

The protein resides in the membrane. Functionally, putative transporter. The polypeptide is Solute carrier family 35 member E3 (SLC35E3) (Homo sapiens (Human)).